Here is a 1183-residue protein sequence, read N- to C-terminus: Rab11 family-interacting protein 3 (1183 aa).

Positions 423 to 448 (AEDPSTESLPRKNGQEESKSALPVST) are disordered. Residues 431–441 (LPRKNGQEESK) show a composition bias toward basic and acidic residues. EF-hand domains lie at 706–741 (EEQS…YGAE) and 738–773 (YGAE…ISNE). Residues Asp719, Asp721, Asp723, Glu730, Asp751, Ser753, and Asp762 each coordinate Ca(2+). The stretch at 902-1121 (ELEKDSLESE…NGQIINLSIQ (220 aa)) forms a coiled coil. The tract at residues 911 to 1015 (EEQHARLRQE…LQDEADDITQ (105 aa)) is ARF-binding domain (ABD). The disordered stretch occupies residues 1005-1044 (KLQDEADDITQRLNEESESRRKMSDKLSHERHTNQKEKEC). An FIP-RBD domain is found at 1121–1183 (QGAKSLFTES…ESNPSILEVK (63 aa)).

It is found in the recycling endosome membrane. Its subcellular location is the cytoplasm. The protein localises to the cytoskeleton. The protein resides in the microtubule organizing center. It localises to the centrosome. It is found in the cleavage furrow. Its subcellular location is the midbody. The protein localises to the golgi apparatus membrane. The protein resides in the golgi apparatus. It localises to the trans-Golgi network membrane. In terms of biological role, downstream effector molecule for Rab11 GTPase which acts as a regulator of endocytic trafficking, cytokinesis and intracellular ciliogenesis by participating in membrane delivery. This is Rab11 family-interacting protein 3 (rab11fip3) from Danio rerio (Zebrafish).